A 27-amino-acid polypeptide reads, in one-letter code: 23S rRNA methylase leader peptide (27 aa).

Functionally, this peptide is involved in the control mechanism of the synthesis of the erythromycin resistance protein. In Enterococcus faecalis (Streptococcus faecalis), this protein is 23S rRNA methylase leader peptide (ermC).